Consider the following 429-residue polypeptide: Trigger factor (429 aa).

In terms of domain architecture, PPIase FKBP-type spans G164 to P249.

Belongs to the FKBP-type PPIase family. Tig subfamily.

Its subcellular location is the cytoplasm. The catalysed reaction is [protein]-peptidylproline (omega=180) = [protein]-peptidylproline (omega=0). Its function is as follows. Involved in protein export. Acts as a chaperone by maintaining the newly synthesized protein in an open conformation. Functions as a peptidyl-prolyl cis-trans isomerase. This Lysinibacillus sphaericus (strain C3-41) protein is Trigger factor.